A 305-amino-acid polypeptide reads, in one-letter code: MYYGFDIGGTKIELAVFNEKLEKRYSERVDTPKHSYDEWLNVITHLVQKADEKFACKGTVGIGVPGFVNQETGIAEITNIRVADNKPILKDLSERLGREVRAENDANCFALSEAWDKDNQQYPVVLGLILGTGFGGGLVFNGKVHSGQSGMAGELGHLQLNYHALKLLGWDKAPIYECGCGNKACLDTYLSGRGFEMLYRDLQGKALSAKEIIRCFYDKDESAVKFVELFIELCAISIGNIITALDPHVIILGGGLSNFDYLYEALPKALPQHLMRTAKVPLIKKAKFGDSGGVRGAAALFLSRD.

ATP-binding positions include 4-11 (GFDIGGTK) and 133-140 (GFGGGLVF). H157, C178, C180, and C185 together coordinate Zn(2+).

It belongs to the ROK (NagC/XylR) family. NagK subfamily.

The enzyme catalyses N-acetyl-D-glucosamine + ATP = N-acetyl-D-glucosamine 6-phosphate + ADP + H(+). It functions in the pathway cell wall biogenesis; peptidoglycan recycling. Functionally, catalyzes the phosphorylation of N-acetyl-D-glucosamine (GlcNAc) derived from cell-wall degradation, yielding GlcNAc-6-P. The protein is N-acetyl-D-glucosamine kinase of Histophilus somni (strain 129Pt) (Haemophilus somnus).